We begin with the raw amino-acid sequence, 95 residues long: uncharacterized protein (95 aa).

The disordered stretch occupies residues 1 to 64; sequence MEIDDIFASK…PKGASGRKRT (64 aa). Positions 18–28 are enriched in basic and acidic residues; sequence KSNDSKSEAKA. The segment covering 35–49 has biased composition (polar residues); sequence TKSTPSRPKPTNNQD.

This is an uncharacterized protein from Schizosaccharomyces pombe (strain 972 / ATCC 24843) (Fission yeast).